The following is a 378-amino-acid chain: UPF0754 membrane protein Exig_0680 (378 aa).

Helical transmembrane passes span 5–25 (VDLVIKMIGMIVIGALIGAVT) and 357–377 (ITWLGGLLGGLIGMIQAILLI).

This sequence belongs to the UPF0754 family.

It is found in the cell membrane. This Exiguobacterium sibiricum (strain DSM 17290 / CCUG 55495 / CIP 109462 / JCM 13490 / 255-15) protein is UPF0754 membrane protein Exig_0680.